We begin with the raw amino-acid sequence, 451 residues long: Protein naked cuticle homolog 2 (451 aa).

Positions 1–108 are disordered; sequence MGKLQSKHAA…PRGPGGQRLN (108 aa). Gly2 carries N-myristoyl glycine lipidation. Positions 2–173 are targeting to the basolateral cell membrane; sequence GKLQSKHAAA…GSSKTLRVKL (172 aa). Composition is skewed to basic and acidic residues over residues 34 to 63 and 89 to 99; these read KGAEEAERRARDKQELPNGDPKEGPFREDQ and DGERAANREGP. Residues 113–178 form an interaction with DVL1, DVL2 and DVL3 region; sequence QCDVSVEEDD…LRVKLTVSPE (66 aa). The EF-hand domain maps to 119–154; that stretch reads EEDDRQEWTFTLYDFDNCGKVTREDMSSLMHTIYEV. Residues Asp132, Asp134, Lys138, and Asp143 each coordinate Ca(2+). 2 disordered regions span residues 162 to 237 and 256 to 408; these read SSGS…PYCV and YTSR…TVEH. Basic and acidic residues predominate over residues 180–215; the sequence is SSKRKEGPPAGQDREPTRCRMEGELAEEPRVADRRL. Residues 300–385 form an interaction with TGFA region; that stretch reads QVLVEHVVPA…PPPPYGHKRY (86 aa). Residues 332-351 are compositionally biased toward low complexity; that stretch reads KSPKGSGKPPGVPASSKSGK.

Belongs to the NKD family. As to quaternary structure, interacts with DVL1, DVL2, DVL3 and PPP2R3A. Interacts with RNF25 and TGFA (via cytoplasmic domain). Ubiquitinated, leading to rapid proteasomal degradation. Interaction with TGFA interferes with RNF25 binding and protects against ubiquitination mediated by RNF25. As to expression, expressed in kidney, lung, pancreas and spleen.

Its subcellular location is the cell membrane. The protein resides in the cytoplasm. The protein localises to the cytoplasmic vesicle. Functionally, cell autonomous antagonist of the canonical Wnt signaling pathway. May activate a second Wnt signaling pathway that controls planar cell polarity. Required for processing of TGFA and for targeting of TGFA to the basolateral membrane of polarized epithelial cells. The chain is Protein naked cuticle homolog 2 (NKD2) from Homo sapiens (Human).